Reading from the N-terminus, the 287-residue chain is ATP synthase gamma chain (287 aa).

It belongs to the ATPase gamma chain family. F-type ATPases have 2 components, CF(1) - the catalytic core - and CF(0) - the membrane proton channel. CF(1) has five subunits: alpha(3), beta(3), gamma(1), delta(1), epsilon(1). CF(0) has three main subunits: a, b and c.

The protein resides in the cell inner membrane. Functionally, produces ATP from ADP in the presence of a proton gradient across the membrane. The gamma chain is believed to be important in regulating ATPase activity and the flow of protons through the CF(0) complex. This is ATP synthase gamma chain from Yersinia pestis.